Reading from the N-terminus, the 339-residue chain is Anthranilate phosphoribosyltransferase (339 aa).

5-phospho-alpha-D-ribose 1-diphosphate contacts are provided by residues Gly-80, 83-84, Thr-88, 90-93, 108-116, and Ser-120; these read GD, NIST, and KHGNRAMSS. Gly-80 lines the anthranilate pocket. Position 92 (Ser-92) interacts with Mg(2+). Asn-111 is an anthranilate binding site. Arg-166 lines the anthranilate pocket. Residues Asp-225 and Glu-226 each contribute to the Mg(2+) site.

This sequence belongs to the anthranilate phosphoribosyltransferase family. In terms of assembly, homodimer. Requires Mg(2+) as cofactor.

The enzyme catalyses N-(5-phospho-beta-D-ribosyl)anthranilate + diphosphate = 5-phospho-alpha-D-ribose 1-diphosphate + anthranilate. It functions in the pathway amino-acid biosynthesis; L-tryptophan biosynthesis; L-tryptophan from chorismate: step 2/5. Its function is as follows. Catalyzes the transfer of the phosphoribosyl group of 5-phosphorylribose-1-pyrophosphate (PRPP) to anthranilate to yield N-(5'-phosphoribosyl)-anthranilate (PRA). In Chloroflexus aurantiacus (strain ATCC 29366 / DSM 635 / J-10-fl), this protein is Anthranilate phosphoribosyltransferase.